A 386-amino-acid chain; its full sequence is S-adenosylmethionine synthase (386 aa).

Glu8 lines the Mg(2+) pocket. His14 contacts ATP. Glu42 lines the K(+) pocket. Glu55 and Gln98 together coordinate L-methionine. Residues 166 to 168, 234 to 237, Asp245, 251 to 252, Ala268, Lys272, and Lys276 contribute to the ATP site; these read DGK, SGRF, and RK. Asp245 is an L-methionine binding site. Lys276 is a binding site for L-methionine.

Belongs to the AdoMet synthase family. As to quaternary structure, homotetramer. Mn(2+) is required as a cofactor. Requires Mg(2+) as cofactor. Co(2+) serves as cofactor. The cofactor is K(+).

Its subcellular location is the cytoplasm. The enzyme catalyses L-methionine + ATP + H2O = S-adenosyl-L-methionine + phosphate + diphosphate. Its pathway is amino-acid biosynthesis; S-adenosyl-L-methionine biosynthesis; S-adenosyl-L-methionine from L-methionine: step 1/1. Functionally, catalyzes the formation of S-adenosylmethionine from methionine and ATP. The reaction comprises two steps that are both catalyzed by the same enzyme: formation of S-adenosylmethionine (AdoMet) and triphosphate, and subsequent hydrolysis of the triphosphate. In Ostreococcus tauri, this protein is S-adenosylmethionine synthase (METK).